A 1240-amino-acid polypeptide reads, in one-letter code: Phospholipid-transporting ATPase 6 (1240 aa).

Topologically, residues 1–75 (MARRRIRSRI…TTRYNLLTFL (75 aa)) are cytoplasmic. Residues 76–97 (PKCLYEQFHRVANFYFLVAAIL) form a helical membrane-spanning segment. The Extracellular portion of the chain corresponds to 98-101 (SVFP). A helical membrane pass occupies residues 102 to 124 (LSPFNKWSMIAPLVFVVGLSMGK). The Cytoplasmic segment spans residues 125-306 (EALEDWRRFM…SRIEKRMDYI (182 aa)). The chain crosses the membrane as a helical span at residues 307–328 (IYTLFALLLTVSFISSLGFAVM). Over 329–360 (TKLLMAEWWYLRPDKPESLTNPTNPLYAWVVH) the chain is Extracellular. The helical transmembrane segment at 361 to 378 (LITALLLYGYLIPISLYV) threads the bilayer. The Cytoplasmic portion of the chain corresponds to 379–943 (SIEVVKVLQA…HGHWCYKRIA (565 aa)). Residue Asp-426 is the 4-aspartylphosphate intermediate of the active site. Lys-625 is covalently cross-linked (Glycyl lysine isopeptide (Lys-Gly) (interchain with G-Cter in ubiquitin)). Mg(2+)-binding residues include Asp-888 and Asp-892. The chain crosses the membrane as a helical span at residues 944-963 (QMICYFFYKNITFGLTLFYF). At 964 to 977 (ECFTGFSGQSIYND) the chain is on the extracellular side. The chain crosses the membrane as a helical span at residues 978–997 (SYLLLFNVVLTSLPVISLGV). Over 998–1027 (FEQDVPSDVCLQFPALYQQGPKNLFFDWYR) the chain is Cytoplasmic. A helical membrane pass occupies residues 1028-1050 (ILGWMGNGVYASIVIFTLNLGIF). The Extracellular segment spans residues 1051 to 1063 (HVQSFRSDGQTAD). The chain crosses the membrane as a helical span at residues 1064 to 1086 (MNAMGTAMFTCIIWAVNVQIALT). Over 1087-1092 (MSHFTW) the chain is Cytoplasmic. A helical transmembrane segment spans residues 1093 to 1113 (IQHVMIWGSIGAWYVFLALYG). The Extracellular segment spans residues 1114–1130 (MLPVKLSGNIFHMLVEI). Residues 1131-1155 (LAPAPIFWLTSLLVIAATTLPYLFH) traverse the membrane as a helical segment. The Cytoplasmic segment spans residues 1156–1240 (ISYQRSVNPL…SNDTPSSNSQ (85 aa)).

Belongs to the cation transport ATPase (P-type) (TC 3.A.3) family. Type IV subfamily.

It localises to the cell membrane. It is found in the endomembrane system. It catalyses the reaction ATP + H2O + phospholipidSide 1 = ADP + phosphate + phospholipidSide 2.. Functionally, involved in transport of phospholipids and in regulation of pollen plasma membrane lipid asymmetry. The sequence is that of Phospholipid-transporting ATPase 6 from Arabidopsis thaliana (Mouse-ear cress).